The primary structure comprises 74 residues: Small ribosomal subunit protein bS18 (74 aa).

This sequence belongs to the bacterial ribosomal protein bS18 family. As to quaternary structure, part of the 30S ribosomal subunit. Forms a tight heterodimer with protein bS6.

Functionally, binds as a heterodimer with protein bS6 to the central domain of the 16S rRNA, where it helps stabilize the platform of the 30S subunit. This Chlorobaculum tepidum (strain ATCC 49652 / DSM 12025 / NBRC 103806 / TLS) (Chlorobium tepidum) protein is Small ribosomal subunit protein bS18.